We begin with the raw amino-acid sequence, 78 residues long: UPF0349 protein ABC2936 (78 aa).

The protein belongs to the UPF0349 family.

This is UPF0349 protein ABC2936 from Shouchella clausii (strain KSM-K16) (Alkalihalobacillus clausii).